A 181-amino-acid chain; its full sequence is CD160 antigen (181 aa).

The N-terminal stretch at 1–24 is a signal peptide; that stretch reads MLLEPGRGCCALAILLAIVDIQSG. Residues 25 to 133 form the Ig-like V-type domain; sequence GCINITSSAS…QGHFFSILFT (109 aa). Asn-28 carries an N-linked (GlcNAc...) asparagine glycan. Disulfide bonds link Cys-44–Cys-112 and Cys-61–Cys-68. Asn-137 is a glycosylation site (N-linked (GlcNAc...) asparagine). Ser-159 carries GPI-anchor amidated serine lipidation. A propeptide spans 160–181 (removed in mature form); sequence SGFLQEKVWVMLVTSLVALQAL.

In terms of assembly, homomultimer; disulfide-linked. Interacts with HLA-G. Interacts with HLA-A2-B2M in complex with an HIV-derived peptide. Interacts with TNFRSF14 (via cysteine-rich domain 1); this interaction is direct. Interacts with LCK and CD247/CD3 zeta chain. As to expression, expression is restricted to functional NK and cytotoxic T lymphocytes. Expressed in viral-specific effector memory and terminally differentiated effector memory CD8+ T cells. Expressed in memory and activated CD4+ T cell subsets (at protein level). Expressed at high levels in intraepithelial lymphocytes (at protein level). Expressed in both alpha-beta and gamma-delta CD8+ T cell subsets (at protein level). Expressed in umbilical vein endothelial cells (at protein level). Expressed in monocytes and at lower levels in B cells. Isoform 3: Expressed exclusively in activated NK cells (at protein level).

The protein resides in the cell membrane. The protein localises to the secreted. Receptor on immune cells capable to deliver stimulatory or inhibitory signals that regulate cell activation and differentiation. Exists as a GPI-anchored and as a transmembrane form, each likely initiating distinct signaling pathways via phosphoinositol 3-kinase in activated NK cells and via LCK and CD247/CD3 zeta chain in activated T cells. Receptor for both classical and non-classical MHC class I molecules. In the context of acute viral infection, recognizes HLA-C and triggers NK cell cytotoxic activity, likely playing a role in anti-viral innate immune response. On CD8+ T cells, binds HLA-A2-B2M in complex with a viral peptide and provides a costimulatory signal to activated/memory T cells. Upon persistent antigen stimulation, such as occurs during chronic viral infection, may progressively inhibit TCR signaling in memory CD8+ T cells, contributing to T cell exhaustion. On endothelial cells, recognizes HLA-G and controls angiogenesis in immune privileged sites. Receptor or ligand for TNF superfamily member TNFRSF14, participating in bidirectional cell-cell contact signaling between antigen presenting cells and lymphocytes. Upon ligation of TNFRSF14, provides stimulatory signal to NK cells enhancing IFNG production and anti-tumor immune response. On activated CD4+ T cells, interacts with TNFRSF14 and down-regulates CD28 costimulatory signaling, restricting memory and alloantigen-specific immune response. In the context of bacterial infection, acts as a ligand for TNFRSF14 on epithelial cells, triggering the production of antimicrobial proteins and pro-inflammatory cytokines. Its function is as follows. The soluble GPI-cleaved form, usually released by activated lymphocytes, might play an immune regulatory role by limiting lymphocyte effector functions. This Homo sapiens (Human) protein is CD160 antigen.